A 249-amino-acid polypeptide reads, in one-letter code: MTRYKATISYDGYAFAGFQRQPHARSVQEEIEKTLTRLNKGQAITVHGAGRTDSGVHALGQVIHFDLPYQMDEEKLRFALDTQSPEDIDVISIELVADDFHCRYAKHSKTYEFTVDRGRPKNPMRRHYATHFPYPLDVERMQIAIKKLEGTHDFTGFTASGTSVEDKVRTITEASLIVDETGQFLTFTFSGNGFLYKQIRNMVGTLLKIGNNRMPVEQIDLILEKKDRQLAGPTAAPNGLYLKEIRYEE.

The active-site Nucleophile is the aspartate 53. Tyrosine 111 provides a ligand contact to substrate.

The protein belongs to the tRNA pseudouridine synthase TruA family. As to quaternary structure, homodimer.

It carries out the reaction uridine(38/39/40) in tRNA = pseudouridine(38/39/40) in tRNA. Functionally, formation of pseudouridine at positions 38, 39 and 40 in the anticodon stem and loop of transfer RNAs. This chain is tRNA pseudouridine synthase A, found in Streptococcus pneumoniae (strain 70585).